Reading from the N-terminus, the 334-residue chain is Dihydroorotate dehydrogenase (quinone) (334 aa).

FMN is bound by residues 59-63 (AGLDK) and Thr83. Lys63 contributes to the substrate binding site. Residue 108-112 (NRMGF) participates in substrate binding. FMN is bound by residues Asn136 and Asn169. Asn169 lines the substrate pocket. The Nucleophile role is filled by Ser172. Asn174 contributes to the substrate binding site. Residues Lys214 and Thr242 each contribute to the FMN site. 243–244 (NT) lines the substrate pocket. Residues Gly265, Gly294, and 315 to 316 (YS) contribute to the FMN site.

This sequence belongs to the dihydroorotate dehydrogenase family. Type 2 subfamily. In terms of assembly, monomer. It depends on FMN as a cofactor.

Its subcellular location is the cell membrane. The catalysed reaction is (S)-dihydroorotate + a quinone = orotate + a quinol. It functions in the pathway pyrimidine metabolism; UMP biosynthesis via de novo pathway; orotate from (S)-dihydroorotate (quinone route): step 1/1. Its function is as follows. Catalyzes the conversion of dihydroorotate to orotate with quinone as electron acceptor. The polypeptide is Dihydroorotate dehydrogenase (quinone) (Acinetobacter baumannii (strain AB0057)).